Here is a 658-residue protein sequence, read N- to C-terminus: Carnitine O-palmitoyltransferase 2, mitochondrial (658 aa).

The transit peptide at Met1–Tyr26 directs the protein to the mitochondrion. Topologically, residues Ser27 to Leu179 are mitochondrial matrix. The note=Mitochondrial inner membrane intramembrane region spans Asn180–Asn209. Over Ala210 to Lys658 the chain is Mitochondrial matrix. His373 functions as the Proton acceptor in the catalytic mechanism. Gly453–Asp465 serves as a coordination point for CoA. 3 residues coordinate (R)-carnitine: Tyr487, Ser489, and Thr500.

The protein belongs to the carnitine/choline acetyltransferase family.

The protein resides in the mitochondrion inner membrane. It carries out the reaction (R)-carnitine + hexadecanoyl-CoA = O-hexadecanoyl-(R)-carnitine + CoA. The catalysed reaction is octanoyl-CoA + (R)-carnitine = O-octanoyl-(R)-carnitine + CoA. The enzyme catalyses decanoyl-CoA + (R)-carnitine = O-decanoyl-(R)-carnitine + CoA. It catalyses the reaction dodecanoyl-CoA + (R)-carnitine = O-dodecanoyl-R-carnitine + CoA. It carries out the reaction tetradecanoyl-CoA + (R)-carnitine = O-tetradecanoyl-(R)-carnitine + CoA. The catalysed reaction is (R)-carnitine + octadecanoyl-CoA = O-octadecanoyl-(R)-carnitine + CoA. The enzyme catalyses eicosanoyl-CoA + (R)-carnitine = O-eicosanoyl-(R)-carnitine + CoA. It catalyses the reaction (9Z)-tetradecenoyl-CoA + (R)-carnitine = O-(9Z)-tetradecenoyl-(R)-carnitine + CoA. It carries out the reaction (5Z)-tetradecenoyl-CoA + (R)-carnitine = O-(5Z)-tetradecenoyl-(R)-carnitine + CoA. The catalysed reaction is (R)-carnitine + (9Z)-octadecenoyl-CoA = O-(9Z)-octadecenoyl-(R)-carnitine + CoA. The enzyme catalyses 4,8-dimethylnonanoyl-CoA + (R)-carnitine = O-4,8-dimethylnonanoyl-(R)-carnitine + CoA. Its pathway is lipid metabolism; fatty acid beta-oxidation. Its function is as follows. Involved in the intramitochondrial synthesis of acylcarnitines from accumulated acyl-CoA metabolites. Reconverts acylcarnitines back into the respective acyl-CoA esters that can then undergo beta-oxidation, an essential step for the mitochondrial uptake of long-chain fatty acids and their subsequent beta-oxidation in the mitochondrion. Active with medium (C8-C12) and long-chain (C14-C18) acyl-CoA esters. The chain is Carnitine O-palmitoyltransferase 2, mitochondrial (cpt2) from Xenopus tropicalis (Western clawed frog).